The following is a 341-amino-acid chain: Ribosomal RNA small subunit methyltransferase C (341 aa).

The protein belongs to the methyltransferase superfamily. RsmC family. As to quaternary structure, monomer.

The protein resides in the cytoplasm. It carries out the reaction guanosine(1207) in 16S rRNA + S-adenosyl-L-methionine = N(2)-methylguanosine(1207) in 16S rRNA + S-adenosyl-L-homocysteine + H(+). Its function is as follows. Specifically methylates the guanine in position 1207 of 16S rRNA in the 30S particle. The sequence is that of Ribosomal RNA small subunit methyltransferase C from Pseudoalteromonas translucida (strain TAC 125).